The following is a 151-amino-acid chain: MAELKDQLSLLGRKTEYKQDYAPEVLEAFDNKHPENDYWVRFNCPEFTSLCPITGQPDFAEIRISYIPDIKMVESKSLKLYLFSFRNHGAFHEDCVNIIMKDLIKLMNPKYIEVTGIFTPRGGISIYPYANYGRPGTKFEQMAEHRLMNRE.

The Thioimide intermediate role is filled by Cys-51. Asp-58 serves as the catalytic Proton donor. Residues 73–75 (VES) and 92–93 (HE) each bind substrate.

The protein belongs to the GTP cyclohydrolase I family. QueF type 1 subfamily.

It localises to the cytoplasm. The enzyme catalyses 7-aminomethyl-7-carbaguanine + 2 NADP(+) = 7-cyano-7-deazaguanine + 2 NADPH + 3 H(+). It participates in tRNA modification; tRNA-queuosine biosynthesis. Functionally, catalyzes the NADPH-dependent reduction of 7-cyano-7-deazaguanine (preQ0) to 7-aminomethyl-7-deazaguanine (preQ1). This is NADPH-dependent 7-cyano-7-deazaguanine reductase from Bacteroides thetaiotaomicron (strain ATCC 29148 / DSM 2079 / JCM 5827 / CCUG 10774 / NCTC 10582 / VPI-5482 / E50).